Reading from the N-terminus, the 792-residue chain is Cis-abienol synthase, chloroplastic (792 aa).

A chloroplast-targeting transit peptide spans 1 to 37; sequence MVLGLRSKIIPLPDHKLGNIKLGSVTNAICHRPCRVR. The Mg(2+) site is built by aspartate 539, aspartate 543, asparagine 684, and glutamate 692. The short motif at 539–543 is the DDXXD motif element; that stretch reads DDFFD.

Belongs to the terpene synthase family. The cofactor is Mg(2+). In terms of tissue distribution, expressed specifically in trichomes.

The protein localises to the plastid. It is found in the chloroplast. It catalyses the reaction 8-hydroxycopalyl diphosphate = cis-abienol + diphosphate. Its pathway is secondary metabolite biosynthesis; terpenoid biosynthesis. Involved in the biosynthesis of cis-abienol, a labdane diterpene that can be used as synthesis precursor of ambergris substitution fragance products. The sequence is that of Cis-abienol synthase, chloroplastic from Nicotiana tabacum (Common tobacco).